Reading from the N-terminus, the 209-residue chain is Phosphoheptose isomerase (209 aa).

An SIS domain is found at 50–209 (IAETFRNGGK…ELVESMMGYA (160 aa)). Residue 65–67 (NGG) participates in substrate binding. 2 residues coordinate Zn(2+): His-74 and Glu-78. Substrate contacts are provided by residues Glu-78, 109-110 (ND), 135-137 (STS), Ser-140, and Gln-188. Gln-188 and His-196 together coordinate Zn(2+).

It belongs to the SIS family. GmhA subfamily. Zn(2+) serves as cofactor.

The protein resides in the cytoplasm. It carries out the reaction 2 D-sedoheptulose 7-phosphate = D-glycero-alpha-D-manno-heptose 7-phosphate + D-glycero-beta-D-manno-heptose 7-phosphate. It participates in carbohydrate biosynthesis; D-glycero-D-manno-heptose 7-phosphate biosynthesis; D-glycero-alpha-D-manno-heptose 7-phosphate and D-glycero-beta-D-manno-heptose 7-phosphate from sedoheptulose 7-phosphate: step 1/1. Functionally, catalyzes the isomerization of sedoheptulose 7-phosphate in D-glycero-D-manno-heptose 7-phosphate. This chain is Phosphoheptose isomerase, found in Chlorobaculum parvum (strain DSM 263 / NCIMB 8327) (Chlorobium vibrioforme subsp. thiosulfatophilum).